The chain runs to 463 residues: A-type ATP synthase subunit B (463 aa).

It belongs to the ATPase alpha/beta chains family. As to quaternary structure, has multiple subunits with at least A(3), B(3), C, D, E, F, H, I and proteolipid K(x).

It localises to the cell membrane. Component of the A-type ATP synthase that produces ATP from ADP in the presence of a proton gradient across the membrane. The B chain is a regulatory subunit. The chain is A-type ATP synthase subunit B from Methanothermobacter thermautotrophicus (strain ATCC 29096 / DSM 1053 / JCM 10044 / NBRC 100330 / Delta H) (Methanobacterium thermoautotrophicum).